The following is a 530-amino-acid chain: Chaperone Ric-8A (530 aa).

Ser435 is modified (phosphoserine). A phosphothreonine mark is found at Thr440 and Thr442. 4 positions are modified to phosphoserine: Ser501, Ser522, Ser523, and Ser527.

The protein belongs to the synembryn family. As to quaternary structure, interacts with GDP-bound G alpha proteins GNAI1, GNAO1 and GNAQ, and with GNA13 with lower affinity. Does not interact with G-alpha proteins when they are in complex with subunits beta and gamma. Interacts (via C-terminus) with RGS14; the interaction stimulates the dissociation of the complex between RGS14 and the active GTP-bound form of GNAI1. Interacts with NCS1; interaction is favored in the absence of Ca(2+) and myristoylation of NCS1 is not required. In terms of processing, phosphorylated at Ser-435 and Thr-440 by CK2, stabilizing its interface with G alpha proteins.

It localises to the cytoplasm. The protein localises to the cell cortex. In terms of biological role, chaperone that specifically binds and folds nascent G alpha proteins prior to G protein heterotrimer formation, promoting their stability and activity: folds GNAI1, GNAO1, GNA13 and GNAQ. Does not fold G(s) G-alpha proteins GNAS nor GNAL. Also acts as a guanine nucleotide exchange factor (GEF) for G alpha proteins by stimulating exchange of bound GDP for free GTP. Involved in regulation of microtubule pulling forces during mitotic movement of chromosomes by stimulating G(i)-alpha protein (GNAI1), possibly leading to release G(i)-alpha-GTP and NuMA proteins from the NuMA-GPSM2-G(i)-alpha-GDP complex. Also acts as an activator for G(q)-alpha (GNAQ) protein by enhancing the G(q)-coupled receptor-mediated ERK activation. The polypeptide is Chaperone Ric-8A (RIC8A) (Pongo abelii (Sumatran orangutan)).